A 395-amino-acid chain; its full sequence is Immunity-related GTPase family M protein 2 (395 aa).

The region spanning 63-239 (NKIKIAVTGD…PKLRETLQKD (177 aa)) is the IRG-type G domain. GTP-binding positions include 72 to 79 (DSGNGMSS), 97 to 101 (TGVVR), and 179 to 181 (KLD).

Belongs to the TRAFAC class dynamin-like GTPase superfamily. IRG family. Ubiquitinated; polyubiquitinated in the cytosol, promoting Gbp1 recruitment to the T.gondii parasitophorous vacuole membranes.

Its subcellular location is the cytoplasmic vesicle membrane. It is found in the golgi apparatus membrane. It localises to the cytoplasm. The protein resides in the cytosol. It carries out the reaction GTP + H2O = GDP + phosphate + H(+). In terms of biological role, immunity-related GTPase that plays important roles in innate immunity and inflammatory response. Acts as a dynamin-like protein that binds to intracellular membranes and promotes remodeling and trafficking of those membranes. Required for clearance of acute protozoan and bacterial infections. Acts by participating to Tgtp1/Irgb6 and Gbp1-mediated parasite killing by promoting their accumulation on the T.gondii parasitophorous vacuole membranes. Also required for prolonged loading of ubiquitin and p62/Sqstm1 to parasitophorous vacuole membranes. Also acts as a key negative regulator of the inflammatory response by inhibiting the non-canonical inflammasome, thereby protecting against Casp11-driven septic shock during endotoxemia. The polypeptide is Immunity-related GTPase family M protein 2 (Mus musculus (Mouse)).